The sequence spans 736 residues: DNA topoisomerase 1 (736 aa).

Residues Lys2–Ile113 enclose the Toprim domain. The Mg(2+) site is built by Glu8 and Asp82. In terms of domain architecture, Topo IA-type catalytic spans Asp129–Ile552. An interaction with DNA region spans residues Ser163–Gln168. Tyr297 (O-(5'-phospho-DNA)-tyrosine intermediate) is an active-site residue. 4 consecutive C4-type zinc fingers follow at residues Cys572–Cys598, Cys616–Cys642, Cys663–Cys689, and Cys702–Cys725.

It belongs to the type IA topoisomerase family. As to quaternary structure, monomer. Mg(2+) is required as a cofactor.

It catalyses the reaction ATP-independent breakage of single-stranded DNA, followed by passage and rejoining.. Releases the supercoiling and torsional tension of DNA, which is introduced during the DNA replication and transcription, by transiently cleaving and rejoining one strand of the DNA duplex. Introduces a single-strand break via transesterification at a target site in duplex DNA. The scissile phosphodiester is attacked by the catalytic tyrosine of the enzyme, resulting in the formation of a DNA-(5'-phosphotyrosyl)-enzyme intermediate and the expulsion of a 3'-OH DNA strand. The free DNA strand then undergoes passage around the unbroken strand, thus removing DNA supercoils. Finally, in the religation step, the DNA 3'-OH attacks the covalent intermediate to expel the active-site tyrosine and restore the DNA phosphodiester backbone. The polypeptide is DNA topoisomerase 1 (Helicobacter pylori (strain J99 / ATCC 700824) (Campylobacter pylori J99)).